A 160-amino-acid polypeptide reads, in one-letter code: MATGGAAGEDVPGGGEFYLRYYVGHKGKFGHEFLEFEFRPDGKLRYANNSNYKNDTMIRKEVFVSPSVLREARRIIQESEIMKEDDNNWPEPDRVGRQELEIVMGNEHISFTTSKIGSLVDVQTSKDPEGLRIFYYLVQDLKCFVFSLINLHFKIKPIQS.

It belongs to the mago nashi family. Heterodimer with Y14A. Heterodimer with Y14B. Part of the mRNA splicing-dependent exon junction complex (EJC); the core complex contains MLN51/CASC3, EIF4A3, MAGO and Y14. Expressed in root, leaf and developing seed tissue.

Its subcellular location is the nucleus. The protein resides in the cytoplasm. In terms of biological role, core component of the splicing-dependent multiprotein exon junction complex (EJC) deposited at splice junctions on mRNAs. The EJC is a dynamic structure consisting of core proteins and several peripheral nuclear and cytoplasmic associated factors that join the complex only transiently either during EJC assembly or during subsequent mRNA metabolism. The EJC marks the position of the exon-exon junction in the mature mRNA for the gene expression machinery and the core components remain bound to spliced mRNAs throughout all stages of mRNA metabolism thereby influencing downstream processes including nuclear mRNA export, subcellular mRNA localization, translation efficiency and nonsense-mediated mRNA decay (NMD). The MAGO-Y14 heterodimer inhibits the ATPase activity of EIF4A3, thereby trapping the ATP-bound EJC core onto spliced mRNA in a stable conformation. The MAGO-Y14 heterodimer interacts with the EJC key regulator PYM leading to EJC disassembly in the cytoplasm. EJC core heterodimers play essential roles in plant growth and development, and pollen and seed development. The MAGO-Y14 heterodimer selectively binds to the UDT1 (UNDEVELOPED TAPETUM 1) pre-mRNA transcript and regulates the splicing of UDT1, a key regulator in stamen development. The polypeptide is Protein mago nashi homolog 2 (Oryza sativa subsp. japonica (Rice)).